The primary structure comprises 345 residues: NADH-ubiquinone oxidoreductase chain 2 (345 aa).

A run of 9 helical transmembrane segments spans residues 1–21 (MNPI…VLTM), 60–80 (FLIQ…NAHL), 110–130 (PIHF…ALII), 149–169 (IPTP…GLGG), 179–196 (MAFS…IITI), 200–222 (LTLF…MHLT), 240–260 (TANL…LSGF), 274–294 (NLVP…MFYL), and 323–343 (TTML…TPTM).

The protein belongs to the complex I subunit 2 family.

Its subcellular location is the mitochondrion inner membrane. It carries out the reaction a ubiquinone + NADH + 5 H(+)(in) = a ubiquinol + NAD(+) + 4 H(+)(out). Its function is as follows. Core subunit of the mitochondrial membrane respiratory chain NADH dehydrogenase (Complex I) that is believed to belong to the minimal assembly required for catalysis. Complex I functions in the transfer of electrons from NADH to the respiratory chain. The immediate electron acceptor for the enzyme is believed to be ubiquinone. The polypeptide is NADH-ubiquinone oxidoreductase chain 2 (MT-ND2) (Varanus melinus (Quince monitor lizard)).